A 1057-amino-acid chain; its full sequence is Carbamoyl phosphate synthase large chain (1057 aa).

The tract at residues 1 to 401 (MPKRDDIQTI…SLLKAIRSLE (401 aa)) is carboxyphosphate synthetic domain. ATP contacts are provided by Arg129, Arg169, Gly175, Gly176, Lys208, Ile210, Glu215, Gly241, Ile242, His243, Gln284, and Glu298. The ATP-grasp 1 domain maps to 133 to 327 (RSLMNDLNVP…IAKLAAKIAV (195 aa)). Positions 284, 298, and 300 each coordinate Mg(2+). Gln284, Glu298, and Asn300 together coordinate Mn(2+). Residues 402-546 (YGVHHLGLPN…YGTYETENES (145 aa)) form an oligomerization domain region. The carbamoyl phosphate synthetic domain stretch occupies residues 547–929 (IVTDKEKILV…ALYKGLTGSG (383 aa)). An ATP-grasp 2 domain is found at 671 to 861 (EALLHTIDVP…MAQLAMQAIM (191 aa)). The ATP site is built by Arg707, Arg746, Leu748, Glu752, Gly777, Val778, His779, Ser780, Gln820, and Glu832. Mg(2+)-binding residues include Gln820, Glu832, and Asn834. Gln820, Glu832, and Asn834 together coordinate Mn(2+). An MGS-like domain is found at 930–1057 (VEVKDHGTVL…ESMTFSMRTM (128 aa)). The allosteric domain stretch occupies residues 930 to 1057 (VEVKDHGTVL…ESMTFSMRTM (128 aa)).

It belongs to the CarB family. As to quaternary structure, composed of two chains; the small (or glutamine) chain promotes the hydrolysis of glutamine to ammonia, which is used by the large (or ammonia) chain to synthesize carbamoyl phosphate. Tetramer of heterodimers (alpha,beta)4. It depends on Mg(2+) as a cofactor. Mn(2+) is required as a cofactor.

The catalysed reaction is hydrogencarbonate + L-glutamine + 2 ATP + H2O = carbamoyl phosphate + L-glutamate + 2 ADP + phosphate + 2 H(+). It carries out the reaction hydrogencarbonate + NH4(+) + 2 ATP = carbamoyl phosphate + 2 ADP + phosphate + 2 H(+). Its pathway is amino-acid biosynthesis; L-arginine biosynthesis; carbamoyl phosphate from bicarbonate: step 1/1. The protein operates within pyrimidine metabolism; UMP biosynthesis via de novo pathway; (S)-dihydroorotate from bicarbonate: step 1/3. Large subunit of the glutamine-dependent carbamoyl phosphate synthetase (CPSase). CPSase catalyzes the formation of carbamoyl phosphate from the ammonia moiety of glutamine, carbonate, and phosphate donated by ATP, constituting the first step of 2 biosynthetic pathways, one leading to arginine and/or urea and the other to pyrimidine nucleotides. The large subunit (synthetase) binds the substrates ammonia (free or transferred from glutamine from the small subunit), hydrogencarbonate and ATP and carries out an ATP-coupled ligase reaction, activating hydrogencarbonate by forming carboxy phosphate which reacts with ammonia to form carbamoyl phosphate. The sequence is that of Carbamoyl phosphate synthase large chain from Staphylococcus haemolyticus (strain JCSC1435).